The primary structure comprises 439 residues: Probable RNA-binding protein 23 (439 aa).

Positions 13–159 (MLEAPYKKEE…PVREPVDNLS (147 aa)) are disordered. Residues 17–34 (PYKKEEDEQQRKEVKKDY) show a composition bias toward basic and acidic residues. A compositionally biased stretch (low complexity) spans 36 to 57 (SNTTSSTSNSGNETSGSSTIGE). The span at 60 to 90 (KKKRSRSHNKSRDRKRSRSRDRDRYRRRNSR) shows a compositional bias: basic residues. Residues 103 to 125 (RSWDRRHGSESRSRDHRREDRVH) show a composition bias toward basic and acidic residues. A phosphoserine mark is found at serine 128 and serine 149. Basic and acidic residues predominate over residues 144–159 (HFREKSPVREPVDNLS). 2 RRM domains span residues 166-243 (RTVF…ASQA) and 263-341 (MRLY…HVTE).

It belongs to the splicing factor SR family. Post-translationally, aryl sulfonamide anticancer drugs, such as indisulam (E7070) or E7820, promote ubiquitination and subsequent degradation by the DCX(DCAF15) complex. Aryl sulfonamide anticancer drugs change the substrate specificity of DCAF15 by acting as a molecular glue that promotes binding between DCAF15 and weak affinity interactor RBM23. Highly expressed in placenta, liver, skeletal muscle, heart and kidney. Expressed at lower levels in the colon, thymus, spleen, small intestine and lung.

Its subcellular location is the nucleus. Its function is as follows. RNA-binding protein that acts both as a transcription coactivator and pre-mRNA splicing factor. Regulates steroid hormone receptor-mediated transcription, independently of the pre-mRNA splicing factor activity. The sequence is that of Probable RNA-binding protein 23 from Homo sapiens (Human).